The following is a 303-amino-acid chain: MHFLAFLLCLIPLALCIIEPRDIDGPTSHEAPTDLPIDWHILSQAAGMAHEPYCLFGDIGDRVGDAEVLWSKGHGVVIQRVKIFHSKSLGVTVSFEGTTASLLSILHDVNAALIDPPKEVAPAYCEGVKLFAGFSNAYMELRDEVYEQIVKFQKQFNDKRVTTTGHSLGAAMAVLAAMDLNKRLDDGIYRSFAFGMPRTGNGAFANDVDKKIGGRFFYIVNGRDWVPRVLPRELGFQHPSGQIWINPPSTTHWKYYPGQENHYGANSEDPILTFEDYHGIYSHICLGYGPGKCPASVGTVYLP.

A signal peptide spans 1 to 16; that stretch reads MHFLAFLLCLIPLALC. Cys54 and Cys293 are disulfide-bonded. The active-site Nucleophile is the Ser167. Asp224 is an active-site residue.

This sequence belongs to the AB hydrolase superfamily. Lipase family. Class 3 subfamily.

The protein localises to the secreted. It carries out the reaction a monoacylglycerol + H2O = glycerol + a fatty acid + H(+). It catalyses the reaction a diacylglycerol + H2O = a monoacylglycerol + a fatty acid + H(+). Functionally, secreted lipase involved in Dandruff and seborrheic dermatitis (D/SD) probably via lipase-mediated breakdown of sebaceous lipids and release of irritating free fatty acids. Shows activity against monoglyceride and diglyceride substrates. Due to an absence of fatty acid synthase genes in Malassezia species, secretory lipases are essential for the yeast to generate free fatty acids from degradation of sebum and assimilate them as lipid sources for growth. Plays an essential role at the pathogen-host interface during disease progression. The polypeptide is Secreted mono- and diacylglycerol lipase LIP4 (Malassezia restricta (strain ATCC 96810 / NBRC 103918 / CBS 7877) (Seborrheic dermatitis infection agent)).